A 384-amino-acid polypeptide reads, in one-letter code: Polyketide synthase BAS (384 aa).

Catalysis depends on cysteine 157, which acts as the Nucleophile and monoketide coumarate intermediate. Cysteine 157 carries the S-(4-hydroxycinnamyl)cysteine modification.

This sequence belongs to the thiolase-like superfamily. Chalcone/stilbene synthases family. In terms of assembly, homodimer.

The enzyme catalyses 4-coumaroyl-CoA + malonyl-CoA + H2O + H(+) = 4-hydroxybenzalacetone + 2 CO2 + 2 CoA. It functions in the pathway secondary metabolite biosynthesis; flavonoid biosynthesis. Functionally, polyketide synthase producing 4-hydroxybenzalacetone. Can use p-coumaryl-CoA as substrate but does not accept hexanoyl-CoA, isobutyryl-CoA, isovaleryl-CoA, and acetyl-CoA as a substrates. Catalyzes the initial key reaction step in the biosynthesis of phenylbutanoids. This is Polyketide synthase BAS (BAS) from Rheum palmatum (Chinese rhubarb).